The following is a 584-amino-acid chain: 4-hydroxybenzoate decarboxylase subunit C (584 aa).

This sequence belongs to the UbiD family. Component of the decarboxylase complex composed of the subunits B and C (Potential). The subunit D usually found in other organisms seems to be absent.

It carries out the reaction 4-hydroxybenzoate + H(+) = phenol + CO2. Its activity is regulated as follows. The enzyme activity is enhanced by Mg(2+), Fe(2+), Mn(2+) and Ca(2+). No stimulation is observed with Cu(2+) and Zn(2+). Catalyzes the reversible decarboxylation of 4-hydroxybenzoate. The protein is 4-hydroxybenzoate decarboxylase subunit C of Chlamydia pneumoniae (Chlamydophila pneumoniae).